The following is a 794-amino-acid chain: Alpha-1,3-galactosidase B (794 aa).

Residues 1–57 form the signal peptide; the sequence is MEGNLSFSLMEASGRSIFFLIEGIREQSIKNMFSRMFSWSFVVAACLAGLFPAQSQG. 5 PbH1 repeats span residues 468–499, 609–631, 632–654, 665–686, and 707–728; these read SEDFHMKGGGVMVRKGTGRVHTAGADATHFSN, YPSVVFRNNIVRNNRARGSLFTT, PERVLVEGNLFDHSSGSAILLAG, CHEVVIRKNTFINNLTSRYQFT, and HRNVLIENNVFKTFDVPLLFAI.

It belongs to the glycosyl hydrolase 110 family. B subfamily.

It catalyses the reaction Hydrolysis of terminal, non-reducing branched (1-&gt;3)-alpha-D-galactosidic residues, producing free D-galactose.. The catalysed reaction is Hydrolysis of terminal, non-reducing linear (1-&gt;3)-alpha-D-galactosidic residues, producing free D-galactose.. It carries out the reaction Hydrolysis of terminal, non-reducing alpha-D-galactose residues in alpha-D-galactosides, including galactose oligosaccharides, galactomannans and galactolipids.. Its function is as follows. Alpha-galactosidase. Removes both branched alpha-1,3-linked galactose residues of blood group B antigens and linear alpha-1,3-linked galactose structures. This Akkermansia muciniphila (strain ATCC BAA-835 / DSM 22959 / JCM 33894 / BCRC 81048 / CCUG 64013 / CIP 107961 / Muc) protein is Alpha-1,3-galactosidase B (glaB).